Reading from the N-terminus, the 637-residue chain is Poly [ADP-ribose] polymerase 2 (637 aa).

A DNA-binding region spans residues Met1–Thr140. The SAP 1 domain occupies Ala2–Ile36. Residues Ala35 to Lys46 show a composition bias toward basic and acidic residues. Positions Ala35–Asp56 are disordered. A Nuclear localization signal motif is present at residues Lys41 to Lys62. The SAP 2 domain occupies Phe69–Ala103. Polar residues predominate over residues Val106–Thr117. The segment at Val106–Glu134 is disordered. Residues Asp118 to Phe127 are compositionally biased toward acidic residues. The WGR domain occupies Gln158–Tyr255. Positions Gln286 to Ser404 constitute a PARP alpha-helical domain. In terms of domain architecture, PARP catalytic spans Asp412 to His637.

This sequence belongs to the ARTD/PARP family.

It is found in the nucleus. The enzyme catalyses NAD(+) + (ADP-D-ribosyl)n-acceptor = nicotinamide + (ADP-D-ribosyl)n+1-acceptor + H(+).. The catalysed reaction is L-aspartyl-[protein] + NAD(+) = 4-O-(ADP-D-ribosyl)-L-aspartyl-[protein] + nicotinamide. It catalyses the reaction L-glutamyl-[protein] + NAD(+) = 5-O-(ADP-D-ribosyl)-L-glutamyl-[protein] + nicotinamide. Functionally, involved in the base excision repair (BER) pathway, by catalyzing the poly(ADP-ribosyl)ation of a limited number of acceptor proteins involved in chromatin architecture and in DNA metabolism. This modification follows DNA damages and appears as an obligatory step in a detection/signaling pathway leading to the reparation of DNA strand breaks. The sequence is that of Poly [ADP-ribose] polymerase 2 (PARP2) from Arabidopsis thaliana (Mouse-ear cress).